The chain runs to 337 residues: Phosphate acyltransferase (337 aa).

Belongs to the PlsX family. In terms of assembly, homodimer. Probably interacts with PlsY.

The protein localises to the cytoplasm. It carries out the reaction a fatty acyl-[ACP] + phosphate = an acyl phosphate + holo-[ACP]. The protein operates within lipid metabolism; phospholipid metabolism. Its function is as follows. Catalyzes the reversible formation of acyl-phosphate (acyl-PO(4)) from acyl-[acyl-carrier-protein] (acyl-ACP). This enzyme utilizes acyl-ACP as fatty acyl donor, but not acyl-CoA. This is Phosphate acyltransferase from Listeria monocytogenes serotype 4b (strain F2365).